A 388-amino-acid chain; its full sequence is Na(+)/H(+) antiporter NhaA (388 aa).

The next 12 helical transmembrane spans lie at 14–34 (TIGILLIIATLLALFLENSPL), 59–79 (LLLWVNDGLMAVFFFYVGLEI), 95–115 (TFPAIAALGGMVVPALLFASL), 125–145 (GWAIPTATDIAFALGVLSLLG), 154–174 (VFLMTLAIVDDLGAIIVIALF), 177–197 (TKLSLTSLVVASIALTILFIM), 200–220 (MCVISKGAYILVGVALWVSVL), 222–242 (SGVHATLAGVALALLIPYRIN), 257–277 (GLHLWVNFFILPLFAFANAGV), 295–315 (IMLGLFIGKQLGVFGFGYLAV), 328–348 (LIQFYGVAVLAGIGFTMSLFI), and 362–382 (ADKLAVLIGSLLSGIWGYIVL).

The protein belongs to the NhaA Na(+)/H(+) (TC 2.A.33) antiporter family.

It is found in the cell inner membrane. It carries out the reaction Na(+)(in) + 2 H(+)(out) = Na(+)(out) + 2 H(+)(in). Its function is as follows. Na(+)/H(+) antiporter that extrudes sodium in exchange for external protons. The protein is Na(+)/H(+) antiporter NhaA of Nitratiruptor sp. (strain SB155-2).